The following is a 232-amino-acid chain: Histone H1B (232 aa).

A compositionally biased stretch (low complexity) spans Met1 to Ala18. Disordered regions lie at residues Met1–Ser44 and Gln99–Ala232. The H15 domain occupies Thr39 to Ala113. 5 stretches are compositionally biased toward basic residues: residues Lys132–Lys141, Lys147–Lys173, Ala181–Ala197, Lys205–Lys214, and Lys222–Ala232.

This sequence belongs to the histone H1/H5 family.

Its subcellular location is the nucleus. The protein resides in the chromosome. Histones H1 are necessary for the condensation of nucleosome chains into higher-order structures. This Chironomus tentans (Midge) protein is Histone H1B.